We begin with the raw amino-acid sequence, 335 residues long: NADP(+)-dependent glycerol-3-phosphate dehydrogenase (335 aa).

G137 contacts sn-glycerol 3-phosphate. NADPH is bound at residue A141. K192, D250, R259, and N260 together coordinate sn-glycerol 3-phosphate. Catalysis depends on K192, which acts as the Proton acceptor. An NADPH-binding site is contributed by R259. Residues V287 and E289 each coordinate NADPH.

It belongs to the NAD-dependent glycerol-3-phosphate dehydrogenase family. As to quaternary structure, homodimer.

The protein resides in the cytoplasm. It catalyses the reaction sn-glycerol 3-phosphate + NADP(+) = dihydroxyacetone phosphate + NADPH + H(+). In terms of biological role, catalyzes the reduction of the glycolytic intermediate dihydroxyacetone phosphate (DHAP) to sn-glycerol 3-phosphate (G3P). Shows a 15-fold preference for NADPH over NADH in the reduction process. Can also catalyze the reverse reaction in vitro. Shows no activity with dihydroxyacetone, glycerol, glycerol-2-phosphate, D-glyceraldehyde-3-phosphate, DL-glyceraldehyde, D-erythrose-4-phosphate, D-fructose-6-phosphate, beta-D-glucose-6-phosphate, or alpha-D-galactose-1-phosphate. The protein is NADP(+)-dependent glycerol-3-phosphate dehydrogenase of Archaeoglobus fulgidus (strain ATCC 49558 / DSM 4304 / JCM 9628 / NBRC 100126 / VC-16).